The chain runs to 943 residues: Serine/threonine-protein kinase ATG1 (943 aa).

In terms of domain architecture, Protein kinase spans 22–327 (FVIDKEIGKG…FEDFFHHPVI (306 aa)). ATP contacts are provided by residues 28 to 36 (IGKGSFAQV) and Lys51. Asp165 acts as the Proton acceptor in catalysis. Disordered stretches follow at residues 334-468 (LVED…LTDE), 503-561 (QQGQ…SPGA), 774-800 (LPEEHPSHPSNRPPETSALGGSSGGQA), 858-888 (HLPKRRVSTSSKEEQSVAAQDASDDMSSDDK), and 914-943 (AASKAQQQQQQQQVVVRRRSGDVTPRSVPT). The segment covering 338-352 (DIPKPEKPVLAETKS) has biased composition (basic and acidic residues). Positions 517–529 (ATQQGHPTSTTGA) are enriched in polar residues. The span at 542–554 (RNDHYRKASHDKT) shows a compositional bias: basic and acidic residues. Positions 919-928 (QQQQQQQQVV) are enriched in low complexity.

This sequence belongs to the protein kinase superfamily. Ser/Thr protein kinase family. APG1/unc-51/ULK1 subfamily. Homodimer. Forms a ternary complex with ATG13 and ATG17.

Its subcellular location is the cytoplasm. It localises to the preautophagosomal structure membrane. The enzyme catalyses L-seryl-[protein] + ATP = O-phospho-L-seryl-[protein] + ADP + H(+). It catalyses the reaction L-threonyl-[protein] + ATP = O-phospho-L-threonyl-[protein] + ADP + H(+). Serine/threonine protein kinase involved in the cytoplasm to vacuole transport (Cvt) and found to be essential in autophagy, where it is required for the formation of autophagosomes. Involved in the clearance of protein aggregates which cannot be efficiently cleared by the proteasome. Required for selective autophagic degradation of the nucleus (nucleophagy) as well as for mitophagy which contributes to regulate mitochondrial quantity and quality by eliminating the mitochondria to a basal level to fulfill cellular energy requirements and preventing excess ROS production. Also involved in endoplasmic reticulum-specific autophagic process, in selective removal of ER-associated degradation (ERAD) substrates. Plays a key role in ATG9 and ATG23 cycling through the pre-autophagosomal structure and is necessary to promote ATG18 binding to ATG9 through phosphorylation of ATG9. Catalyzes phosphorylation of ATG4, decreasing the interaction between ATG4 and ATG8 and impairing deconjugation of PE-conjugated forms of ATG8. The sequence is that of Serine/threonine-protein kinase ATG1 from Chaetomium globosum (strain ATCC 6205 / CBS 148.51 / DSM 1962 / NBRC 6347 / NRRL 1970) (Soil fungus).